We begin with the raw amino-acid sequence, 303 residues long: MTASAPAASTSARLLDGRRIAEELLDGLKSRVDARLAAGKARPGLAVVLVGGDPASSVYVRNKRRAAEKVGIEAFDYDLPQCTSEAELAALIDELNADPKIHGILIQLPLPGIPDANRLIQRIDPRKDVDGFHPQNVGHLALREFGLRPCTPRGIVTLLSHTDQPVRGRNATIVGVSNHVGRPMGLELLIAGCTVTSCHKFTPPDVLEASVRNADILVVAVGRPGLIPGEWVKPGAVVIDVGINRLDDGRLVGDVGFDAAAQRAAWITPVPGGVGPMTVATLMQNTIEAADAAGIEGAGVGIR.

NADP(+)-binding positions include 175 to 177 and Ile243; that span reads GVS.

Belongs to the tetrahydrofolate dehydrogenase/cyclohydrolase family. As to quaternary structure, homodimer.

The enzyme catalyses (6R)-5,10-methylene-5,6,7,8-tetrahydrofolate + NADP(+) = (6R)-5,10-methenyltetrahydrofolate + NADPH. It catalyses the reaction (6R)-5,10-methenyltetrahydrofolate + H2O = (6R)-10-formyltetrahydrofolate + H(+). The protein operates within one-carbon metabolism; tetrahydrofolate interconversion. Its function is as follows. Catalyzes the oxidation of 5,10-methylenetetrahydrofolate to 5,10-methenyltetrahydrofolate and then the hydrolysis of 5,10-methenyltetrahydrofolate to 10-formyltetrahydrofolate. The chain is Bifunctional protein FolD from Xanthomonas oryzae pv. oryzae (strain PXO99A).